The following is a 637-amino-acid chain: MAKVVGIDLGTTNSEVAVMQGGEPVVIPSAEGSTLIPSVVAVNKNGERIVGRQAKNQAILNPENTVYSIKRFMGRKWGEPAGRELPVEADAKRKPYKVIQGNNNEVRVVMGDKDFSPPEVSAMILQKLKSDAEAYLGEKVTEAVITVPAYFNDAQRQATKDAGAIAGLKVLRIINEPTAAALAYGLDKKKDETIAVYDLGGGTFDISILELGEGTFQVKSTAGDTHLGGDDFDQKIIDWLIAEYKKDQGIDLSKDKTALQRLKEAAEKAKIELSTVQQAEINLPFITADASGPKHLNIILTRAKLEQMVMDLVDKSLEPCRQALKDSGKTASEINEVILVGGQTRMPLVQQKVKEFFGKEPNKGVNPDEVVAIGAAIQAGVLKGEVSDVLLLDVIPLTLGIETLGGVSTALITRNTTIPTSKSQVFSTAADNQPSVEIHVLQGERPMAADNRTLGRFMLDGILPAPRGVPQIEVTFDIDANGILSVKAKDKGTGREQKITITASSGLSKEEVEKMTREAEAHAAEDSKRKEEIEARNVADNLAYNAEKTLRDNKDKIPAELNTELESKIAAVRTALQGTDVDAIKTTTQELSTALQSVGSAVYGQQQEQGAPAQEEPSAEGKKNDDEGTVEGEFREV.

T203 bears the Phosphothreonine; by autocatalysis mark. The interval 600–637 (SAVYGQQQEQGAPAQEEPSAEGKKNDDEGTVEGEFREV) is disordered. A compositionally biased stretch (low complexity) spans 604-616 (GQQQEQGAPAQEE). Basic and acidic residues predominate over residues 619–637 (AEGKKNDDEGTVEGEFREV).

Belongs to the heat shock protein 70 family.

Acts as a chaperone. The protein is Chaperone protein DnaK of Dehalococcoides mccartyi (strain ATCC BAA-2266 / KCTC 15142 / 195) (Dehalococcoides ethenogenes (strain 195)).